Consider the following 607-residue polypeptide: Threonine--tRNA ligase (607 aa).

Residues methionine 1 to alanine 143 are editing domain. 2 catalytic regions span residues proline 193–proline 489 and arginine 194–proline 489. Cysteine 286, histidine 337, and histidine 458 together coordinate Zn(2+).

It belongs to the class-II aminoacyl-tRNA synthetase family. In terms of assembly, homodimer. The cofactor is Zn(2+).

Its subcellular location is the cytoplasm. The catalysed reaction is tRNA(Thr) + L-threonine + ATP = L-threonyl-tRNA(Thr) + AMP + diphosphate + H(+). Functionally, catalyzes the attachment of threonine to tRNA(Thr) in a two-step reaction: L-threonine is first activated by ATP to form Thr-AMP and then transferred to the acceptor end of tRNA(Thr). Also edits incorrectly charged L-seryl-tRNA(Thr). This Pyrobaculum calidifontis (strain DSM 21063 / JCM 11548 / VA1) protein is Threonine--tRNA ligase.